The primary structure comprises 451 residues: tRNA modification GTPase MnmE (451 aa).

(6S)-5-formyl-5,6,7,8-tetrahydrofolate-binding residues include R25, E82, and K121. One can recognise a TrmE-type G domain in the interval 217-374 (GMSVVILGRP…LKQHLKTEMG (158 aa)). Residue N227 participates in K(+) binding. Residues 227 to 232 (NAGKSS), 246 to 252 (TDIAGTT), and 271 to 274 (DTAG) contribute to the GTP site. S231 is a binding site for Mg(2+). Positions 246, 248, and 251 each coordinate K(+). T252 contributes to the Mg(2+) binding site. K451 lines the (6S)-5-formyl-5,6,7,8-tetrahydrofolate pocket.

It belongs to the TRAFAC class TrmE-Era-EngA-EngB-Septin-like GTPase superfamily. TrmE GTPase family. As to quaternary structure, homodimer. Heterotetramer of two MnmE and two MnmG subunits. K(+) serves as cofactor.

It localises to the cytoplasm. Its function is as follows. Exhibits a very high intrinsic GTPase hydrolysis rate. Involved in the addition of a carboxymethylaminomethyl (cmnm) group at the wobble position (U34) of certain tRNAs, forming tRNA-cmnm(5)s(2)U34. This Hydrogenovibrio crunogenus (strain DSM 25203 / XCL-2) (Thiomicrospira crunogena) protein is tRNA modification GTPase MnmE.